The following is a 259-amino-acid chain: Ribonuclease PH (259 aa).

Phosphate-binding positions include arginine 88 and 126-128; that span reads GTR.

Belongs to the RNase PH family. In terms of assembly, homohexameric ring arranged as a trimer of dimers.

It carries out the reaction tRNA(n+1) + phosphate = tRNA(n) + a ribonucleoside 5'-diphosphate. Its function is as follows. Phosphorolytic 3'-5' exoribonuclease that plays an important role in tRNA 3'-end maturation. Removes nucleotide residues following the 3'-CCA terminus of tRNAs; can also add nucleotides to the ends of RNA molecules by using nucleoside diphosphates as substrates, but this may not be physiologically important. Probably plays a role in initiation of 16S rRNA degradation (leading to ribosome degradation) during starvation. The sequence is that of Ribonuclease PH from Mycolicibacterium smegmatis (strain ATCC 700084 / mc(2)155) (Mycobacterium smegmatis).